Consider the following 234-residue polypeptide: MSVHIGAKEHEIADKILLPGDPLRAKYIAETFLEGATCYNQVRGMLGFTGTYKGHRISVQGTGMGVPSISIYITELMQSYNVQTLIRVGTCGAIQKDVKVRDVILAMTSSTDSQMNRMTFGGIDYAPTANFDLLKTAYEIGKEKGLQLKVGSVFTADMFYNENAQFEKLARYGVLAVEMETTALYTLAAKFGRKALSVLTVSDHILTGEETTAEERQTTFNEMIEVALETAIRQ.

His4 contacts a purine D-ribonucleoside. Residues Gly20, Arg24, Arg43, and 87–90 (RVGT) each bind phosphate. Residues Glu162, 178 to 180 (EME), and 202 to 203 (SD) contribute to the a purine D-ribonucleoside site. The Proton donor role is filled by Asp203.

It belongs to the PNP/UDP phosphorylase family. As to quaternary structure, homohexamer; trimer of homodimers.

It catalyses the reaction a purine D-ribonucleoside + phosphate = a purine nucleobase + alpha-D-ribose 1-phosphate. It carries out the reaction a purine 2'-deoxy-D-ribonucleoside + phosphate = a purine nucleobase + 2-deoxy-alpha-D-ribose 1-phosphate. Catalyzes the reversible phosphorolytic breakdown of the N-glycosidic bond in the beta-(deoxy)ribonucleoside molecules, with the formation of the corresponding free purine bases and pentose-1-phosphate. Its function is as follows. Cleavage of adenosine and its derivatives. This chain is Purine nucleoside phosphorylase DeoD-type, found in Geobacillus stearothermophilus (Bacillus stearothermophilus).